The chain runs to 1161 residues: Integrin alpha-D (1161 aa).

The N-terminal stretch at 1–17 (MTFGTVLLLSVLASYHG) is a signal peptide. Residues 18-1099 (FNLDVEEPTI…MVLEEDEVYN (1082 aa)) are Extracellular-facing. FG-GAP repeat units follow at residues 19–76 (NLDV…MCQP) and 77–136 (IPLH…IIQT). Asparagine 59 carries N-linked (GlcNAc...) asparagine glycosylation. A disulfide bridge connects residues cysteine 67 and cysteine 74. Residues asparagine 87 and asparagine 99 are each glycosylated (N-linked (GlcNAc...) asparagine). Cysteine 106 and cysteine 124 are disulfide-bonded. The 183-residue stretch at 150-332 (DIVFLIDGSG…SIQKQLQEKI (183 aa)) folds into the VWFA domain. FG-GAP repeat units lie at residues 339–390 (QSRA…PTFI), 391–442 (NMSQ…SRQW), 443–503 (RKKA…RVQW), 506–564 (DAVL…SGIS), and 569–629 (QRIA…FSPV). N-linked (GlcNAc...) asparagine glycosylation is present at asparagine 391. 11 residues coordinate Ca(2+): aspartate 465, aspartate 467, aspartate 469, aspartate 473, aspartate 529, asparagine 531, aspartate 533, aspartate 537, aspartate 592, aspartate 596, and aspartate 600. Cysteine 654 and cysteine 709 are oxidised to a cystine. Asparagine 690 and asparagine 732 each carry an N-linked (GlcNAc...) asparagine glycan. 2 disulfide bridges follow: cysteine 768–cysteine 774 and cysteine 845–cysteine 860. 2 N-linked (GlcNAc...) asparagine glycosylation sites follow: asparagine 872 and asparagine 956. 2 cysteine pairs are disulfide-bonded: cysteine 993/cysteine 1017 and cysteine 1022/cysteine 1027. Asparagine 1045 carries N-linked (GlcNAc...) asparagine glycosylation. The chain crosses the membrane as a helical span at residues 1100-1120 (AIPIIMGSSVGALLLLALITA). The Cytoplasmic portion of the chain corresponds to 1121-1161 (TLYKLGFFKRHYKEMLEDKPEDTATFSGDDFSCVAPNVPLS). The GFFKR motif motif lies at 1126–1130 (GFFKR).

It belongs to the integrin alpha chain family. As to quaternary structure, heterodimer of an alpha and a beta subunit. Alpha-D associates with beta-2. As to expression, expressed moderately on myelomonocytic cell lines and subsets of peripheral blood leukocytes and strongly on tissue-specialized cells, including macrophages foam cells within atherosclerotic plaques, and on splenic red pulp macrophages.

It localises to the membrane. Its function is as follows. Integrin alpha-D/beta-2 is a receptor for ICAM3 and VCAM1. May play a role in the atherosclerotic process such as clearing lipoproteins from plaques and in phagocytosis of blood-borne pathogens, particulate matter, and senescent erythrocytes from the blood. The protein is Integrin alpha-D (ITGAD) of Homo sapiens (Human).